A 529-amino-acid chain; its full sequence is Bifunctional purine biosynthesis protein PurH (529 aa).

The region spanning 2–149 (TDLSPVRRAL…KNHAFVNVVV (148 aa)) is the MGS-like domain.

The protein belongs to the PurH family.

It catalyses the reaction (6R)-10-formyltetrahydrofolate + 5-amino-1-(5-phospho-beta-D-ribosyl)imidazole-4-carboxamide = 5-formamido-1-(5-phospho-D-ribosyl)imidazole-4-carboxamide + (6S)-5,6,7,8-tetrahydrofolate. The catalysed reaction is IMP + H2O = 5-formamido-1-(5-phospho-D-ribosyl)imidazole-4-carboxamide. It functions in the pathway purine metabolism; IMP biosynthesis via de novo pathway; 5-formamido-1-(5-phospho-D-ribosyl)imidazole-4-carboxamide from 5-amino-1-(5-phospho-D-ribosyl)imidazole-4-carboxamide (10-formyl THF route): step 1/1. The protein operates within purine metabolism; IMP biosynthesis via de novo pathway; IMP from 5-formamido-1-(5-phospho-D-ribosyl)imidazole-4-carboxamide: step 1/1. The protein is Bifunctional purine biosynthesis protein PurH of Ruegeria pomeroyi (strain ATCC 700808 / DSM 15171 / DSS-3) (Silicibacter pomeroyi).